We begin with the raw amino-acid sequence, 266 residues long: Glutamate racemase (266 aa).

Substrate-binding positions include 7 to 8 (DS) and 39 to 40 (YG). Cys70 (proton donor/acceptor) is an active-site residue. 71–72 (NT) contributes to the substrate binding site. Cys186 (proton donor/acceptor) is an active-site residue. 187–188 (TH) contacts substrate.

This sequence belongs to the aspartate/glutamate racemases family.

It catalyses the reaction L-glutamate = D-glutamate. It participates in cell wall biogenesis; peptidoglycan biosynthesis. In terms of biological role, provides the (R)-glutamate required for cell wall biosynthesis. The chain is Glutamate racemase from Campylobacter curvus (strain 525.92).